We begin with the raw amino-acid sequence, 405 residues long: Acetate kinase (405 aa).

Mg(2+) is bound at residue Asn-10. Lys-17 is an ATP binding site. Arg-93 contributes to the substrate binding site. The active-site Proton donor/acceptor is the Asp-150. ATP contacts are provided by residues His-210–Gly-214, Asp-284–Arg-286, and Gly-332–Asn-336. Position 386 (Glu-386) interacts with Mg(2+).

It belongs to the acetokinase family. In terms of assembly, homodimer. Mg(2+) serves as cofactor. Requires Mn(2+) as cofactor.

The protein resides in the cytoplasm. The catalysed reaction is acetate + ATP = acetyl phosphate + ADP. Its pathway is metabolic intermediate biosynthesis; acetyl-CoA biosynthesis; acetyl-CoA from acetate: step 1/2. Its function is as follows. Catalyzes the formation of acetyl phosphate from acetate and ATP. Can also catalyze the reverse reaction. The chain is Acetate kinase from Streptomyces avermitilis (strain ATCC 31267 / DSM 46492 / JCM 5070 / NBRC 14893 / NCIMB 12804 / NRRL 8165 / MA-4680).